Consider the following 393-residue polypeptide: Probable RNA methyltransferase sce3898 (393 aa).

Glu-82 acts as the Proton acceptor in catalysis. A Radical SAM core domain is found at 90–329 (RPGRYSACVS…VRSARLDAFR (240 aa)). Cys-97 and Cys-353 are disulfide-bonded. Residues Cys-104, Cys-108, and Cys-111 each coordinate [4Fe-4S] cluster. S-adenosyl-L-methionine-binding positions include 157 to 158 (GE), 212 to 214 (SLG), and Asn-294. Catalysis depends on Cys-353, which acts as the S-methylcysteine intermediate. A disordered region spans residues 357–393 (ARPSAEAQRPGGRRAPPRPGATAGAADVGPSAPPRPA). Residues 373–382 (PRPGATAGAA) are compositionally biased toward low complexity.

It belongs to the radical SAM superfamily. RlmN family. [4Fe-4S] cluster serves as cofactor.

It localises to the cytoplasm. This Sorangium cellulosum (strain So ce56) (Polyangium cellulosum (strain So ce56)) protein is Probable RNA methyltransferase sce3898.